The chain runs to 648 residues: Transcriptional regulator ManR (648 aa).

PRD domains are found at residues K187–Q292 and L297–S404. Phosphohistidine; by HPr is present on residues H222, H281, H334, and H393. The PTS EIIB type-2 domain maps to K409–R500. C415 is modified (phosphocysteine; by EIIA). The PTS EIIA type-2 domain maps to N510–Y648. A Phosphohistidine; by EIIB modification is found at H570.

Belongs to the transcriptional antiterminator BglG family.

It carries out the reaction D-mannose(out) + N(pros)-phospho-L-histidyl-[protein] = D-mannose 6-phosphate(in) + L-histidyl-[protein]. Its activity is regulated as follows. The regulatory activity of ManR is modulated by phosphorylation and dephosphorylation of the various ManR domains. It becomes activated via phosphoryl group transfer from PEP, EI and HPr on the two conserved histidine residues in the PRD 2 domain, whereas phosphorylation of the EIIA-like domain on His-570 by the PTS EIIB-Man domain of ManP inactivates ManR. In terms of biological role, positively regulates the expression of the mannose operon that consists of three genes, manP, manA, and yjdF, which are responsible for the transport and utilization of mannose. Also activates its own expression. This Bacillus subtilis (strain 168) protein is Transcriptional regulator ManR (manR).